We begin with the raw amino-acid sequence, 842 residues long: Valine--tRNA ligase (842 aa).

The 'HIGH' region motif lies at 86–96 (PFTSGELHMGH). Positions 572-576 (RMSKS) match the 'KMSKS' region motif. Lys-575 is a binding site for ATP.

It belongs to the class-I aminoacyl-tRNA synthetase family. ValS type 2 subfamily.

Its subcellular location is the cytoplasm. It carries out the reaction tRNA(Val) + L-valine + ATP = L-valyl-tRNA(Val) + AMP + diphosphate. Functionally, catalyzes the attachment of valine to tRNA(Val). As ValRS can inadvertently accommodate and process structurally similar amino acids such as threonine, to avoid such errors, it has a 'posttransfer' editing activity that hydrolyzes mischarged Thr-tRNA(Val) in a tRNA-dependent manner. The sequence is that of Valine--tRNA ligase from Saccharolobus solfataricus (strain ATCC 35092 / DSM 1617 / JCM 11322 / P2) (Sulfolobus solfataricus).